Reading from the N-terminus, the 336-residue chain is UDP-N-acetylenolpyruvoylglucosamine reductase (336 aa).

Residues 1 to 178 form the FAD-binding PCMH-type domain; it reads MAHSLQTLHT…TTVHLALPKE (178 aa). Arg154 is an active-site residue. The active-site Proton donor is Ser222. Residue Glu318 is part of the active site.

It belongs to the MurB family. The cofactor is FAD.

The protein localises to the cytoplasm. It carries out the reaction UDP-N-acetyl-alpha-D-muramate + NADP(+) = UDP-N-acetyl-3-O-(1-carboxyvinyl)-alpha-D-glucosamine + NADPH + H(+). It participates in cell wall biogenesis; peptidoglycan biosynthesis. In terms of biological role, cell wall formation. The polypeptide is UDP-N-acetylenolpyruvoylglucosamine reductase (Pseudoalteromonas translucida (strain TAC 125)).